The sequence spans 343 residues: Sodium/bile acid cotransporter 7-A (343 aa).

The Cytoplasmic portion of the chain corresponds to 1–10; sequence MGLLERLRKE. The helical transmembrane segment at 11-31 threads the bilayer; the sequence is WFIVGIILVIAAAKLEPTVGV. The Extracellular portion of the chain corresponds to 32–37; the sequence is KGGPLK. A helical membrane pass occupies residues 38–58; it reads PEITITYIAVSAIFFNSGLSL. Topologically, residues 59–71 are cytoplasmic; sequence KTEELTNALMHVK. A helical transmembrane segment spans residues 72–92; the sequence is LHLFVQLFTLVFFPTAIWLFL. The Extracellular portion of the chain corresponds to 93-116; the sequence is QVLSLTPINEWLLKGLQTVSCMPP. Residues 117-137 traverse the membrane as a helical segment; the sequence is PVSSAVILTKAVGGNEAAAIF. Asparagine 138 is a topological domain (cytoplasmic). Residues 139–159 traverse the membrane as a helical segment; sequence SAFGSFLGIVVTPLLLLLFLG. Residues 160–163 lie on the Extracellular side of the membrane; it reads SSSS. A helical membrane pass occupies residues 164-184; that stretch reads VPFTSIFSQLFMTVVVPLIIG. The Cytoplasmic segment spans residues 185 to 201; sequence QIVRRYIKDWLERKKPP. The helical transmembrane segment at 202–222 threads the bilayer; the sequence is FGAISSCVLLMIIYTTFCDTF. The Extracellular segment spans residues 223–234; it reads SNPNIDLDTFSL. A helical transmembrane segment spans residues 235–255; it reads VVIVFIIFFIQLAFMLLTFLF. The Cytoplasmic segment spans residues 256–270; that stretch reads STSKNSGFTPADTVA. The chain crosses the membrane as a helical span at residues 271–291; sequence IVFCSTHKSLTLGIPMLKIVF. At 292–298 the chain is on the extracellular side; that stretch reads VGYEHLS. A helical membrane pass occupies residues 299 to 319; sequence LISVPLLIYHPAQILLGSVLV. Topologically, residues 320–343 are cytoplasmic; sequence PTIKSWMLSRQKALKLTRQPKIPL.

It belongs to the bile acid:sodium symporter (BASS) (TC 2.A.28) family. In terms of tissue distribution, strongly expressed in small intestine. Moderately expressed in spleen. Weakly expressed in skeletal muscle. Not detected in other tissues tested.

Its subcellular location is the cell membrane. The protein localises to the endoplasmic reticulum membrane. It is found in the golgi apparatus membrane. Involved in teeth and skeletal development. Has an essential role in the biosynthesis and trafficking of glycosaminoglycans and glycoproteins to produce a proper functioning extracellular matrix. Required for extracellular matrix mineralization. Also involved in the regulation of cellular calcium homeostasis. Does not show transport activity towards bile acids or steroid sulfates. The polypeptide is Sodium/bile acid cotransporter 7-A (slc10a7-a) (Xenopus laevis (African clawed frog)).